Reading from the N-terminus, the 154-residue chain is Transcriptional repressor NrdR (154 aa).

A zinc finger spans residues 3 to 34 (CPFCGNDETKVLESRQVEEGTAVRRRRECERC). The 91-residue stretch at 49-139 (LIVVKKDGRR…VYREFKDVQR (91 aa)) folds into the ATP-cone domain.

This sequence belongs to the NrdR family. The cofactor is Zn(2+).

Functionally, negatively regulates transcription of bacterial ribonucleotide reductase nrd genes and operons by binding to NrdR-boxes. The sequence is that of Transcriptional repressor NrdR from Desulfitobacterium hafniense (strain DSM 10664 / DCB-2).